Here is a 322-residue protein sequence, read N- to C-terminus: MLERAVTYKNNGQINIILNGQKQVLTNAEAEAEYQAALQKNEAKHGILKEIEKEMSALVGMEEMKRNIKEIYAWIFVNQKRAEQGLKVGKQALHMMFKGNPGTGKTTVARLIGKLFFEMNVLSKGHLIEAERADLVGEYIGHTAQKTRDLIKKSLGGILFIDEAYSLARGGEKDFGKEAIDTLVKHMEDKQHEFILILAGYSREMDHFLSLNPGLQSRFPISIDFPDYSVTQLMEIAKRMIDEREYQLSQEAEWKLKDYLMTVKSTTSPIKFSNGRFVRNVIEKSIRAQAMRLLMGDQYLKSDLMTIKSQDLSIKEEASGSA.

Residue 99 to 106 (GNPGTGKT) participates in ATP binding.

It belongs to the CbxX/CfxQ family.

The polypeptide is Stage V sporulation protein K (spoVK) (Bacillus subtilis (strain 168)).